The sequence spans 645 residues: Threonine--tRNA ligase (645 aa).

A TGS domain is found at 1–63; the sequence is MNQINIQFPD…EQDGAIEIIT (63 aa). Residues 242–540 are catalytic; the sequence is DHRKIGKDLE…LTEETKGAFP (299 aa). Residues Cys-336, His-387, and His-517 each coordinate Zn(2+).

The protein belongs to the class-II aminoacyl-tRNA synthetase family. As to quaternary structure, homodimer. It depends on Zn(2+) as a cofactor.

Its subcellular location is the cytoplasm. It catalyses the reaction tRNA(Thr) + L-threonine + ATP = L-threonyl-tRNA(Thr) + AMP + diphosphate + H(+). In terms of biological role, catalyzes the attachment of threonine to tRNA(Thr) in a two-step reaction: L-threonine is first activated by ATP to form Thr-AMP and then transferred to the acceptor end of tRNA(Thr). Also edits incorrectly charged L-seryl-tRNA(Thr). The protein is Threonine--tRNA ligase of Staphylococcus epidermidis (strain ATCC 35984 / DSM 28319 / BCRC 17069 / CCUG 31568 / BM 3577 / RP62A).